The chain runs to 425 residues: Beta-1,4-galactosyltransferase galt-1 (425 aa).

At 1–8 the chain is on the cytoplasmic side; the sequence is MPRITASK. Residues 9 to 29 form a helical; Signal-anchor for type II membrane protein membrane-spanning segment; it reads IVLLIALSFCITVIYHFPIAT. The Lumenal segment spans residues 30 to 425; it reads RSSKEYDEYG…FDSVVGLLDL (396 aa). N-linked (GlcNAc...) asparagine glycosylation is found at asparagine 109 and asparagine 152. One can recognise a GT92 domain in the interval 189-394; the sequence is KMSICVPALF…LLRVYHYKDK (206 aa).

The protein belongs to the glycosyltransferase 92 family. Mn(2+) serves as cofactor. Post-translationally, N-glycosylated. Expressed in intestine and coelomocytes.

It is found in the golgi apparatus. The protein localises to the golgi stack membrane. Inhibited by EDTA, Cu(2+) and Zn(2+). In terms of biological role, catalyzes the transfer of beta-galactose from UDP-galactose to position 4 of alpha-1,6-linked fucose at the reducing end GlcNAc in N-glycan cores. Involved in susceptibility to the nematotoxic C.cinerea galectin Cgl2, likely by contributing to the synthesis of core alpha-1,6-fucosylated N-glycans to which Cgl2 binds. The polypeptide is Beta-1,4-galactosyltransferase galt-1 (Caenorhabditis elegans).